A 478-amino-acid polypeptide reads, in one-letter code: Adenosylhomocysteinase (478 aa).

Residues Thr-67, Asp-144, and Glu-204 each coordinate substrate. 205 to 207 (TTT) provides a ligand contact to NAD(+). Substrate is bound by residues Lys-234 and Asp-238. Residues Asn-239, 268–273 (GYGDVG), Glu-291, Asn-326, 347–349 (IGH), and Asn-392 contribute to the NAD(+) site.

It belongs to the adenosylhomocysteinase family. The cofactor is NAD(+).

It is found in the cytoplasm. It catalyses the reaction S-adenosyl-L-homocysteine + H2O = L-homocysteine + adenosine. It functions in the pathway amino-acid biosynthesis; L-homocysteine biosynthesis; L-homocysteine from S-adenosyl-L-homocysteine: step 1/1. Functionally, may play a key role in the regulation of the intracellular concentration of adenosylhomocysteine. This chain is Adenosylhomocysteinase, found in Nitrosomonas europaea (strain ATCC 19718 / CIP 103999 / KCTC 2705 / NBRC 14298).